The chain runs to 387 residues: Succinate--CoA ligase [ADP-forming] subunit beta (387 aa).

Positions 9–236 (KELFAKHNVP…KDATDPLELK (228 aa)) constitute an ATP-grasp domain. Residues lysine 45, 52-54 (GRG), serine 94, and glutamate 99 contribute to the ATP site. Mg(2+) is bound by residues asparagine 191 and aspartate 205. Substrate contacts are provided by residues asparagine 256 and 318–320 (GIT).

This sequence belongs to the succinate/malate CoA ligase beta subunit family. Heterotetramer of two alpha and two beta subunits. Mg(2+) serves as cofactor.

The enzyme catalyses succinate + ATP + CoA = succinyl-CoA + ADP + phosphate. It carries out the reaction GTP + succinate + CoA = succinyl-CoA + GDP + phosphate. The protein operates within carbohydrate metabolism; tricarboxylic acid cycle; succinate from succinyl-CoA (ligase route): step 1/1. Functionally, succinyl-CoA synthetase functions in the citric acid cycle (TCA), coupling the hydrolysis of succinyl-CoA to the synthesis of either ATP or GTP and thus represents the only step of substrate-level phosphorylation in the TCA. The beta subunit provides nucleotide specificity of the enzyme and binds the substrate succinate, while the binding sites for coenzyme A and phosphate are found in the alpha subunit. This Mycolicibacterium vanbaalenii (strain DSM 7251 / JCM 13017 / BCRC 16820 / KCTC 9966 / NRRL B-24157 / PYR-1) (Mycobacterium vanbaalenii) protein is Succinate--CoA ligase [ADP-forming] subunit beta.